Consider the following 104-residue polypeptide: Small ribosomal subunit protein bS18 (104 aa).

Basic and acidic residues predominate over residues 1 to 14 (MMNNEHDNFQKEVE). Residues 1–25 (MMNNEHDNFQKEVETTTETTFNREE) are disordered.

Belongs to the bacterial ribosomal protein bS18 family. Part of the 30S ribosomal subunit. Forms a tight heterodimer with protein bS6.

In terms of biological role, binds as a heterodimer with protein bS6 to the central domain of the 16S rRNA, where it helps stabilize the platform of the 30S subunit. The chain is Small ribosomal subunit protein bS18 from Mycoplasma pneumoniae (strain ATCC 29342 / M129 / Subtype 1) (Mycoplasmoides pneumoniae).